Reading from the N-terminus, the 45-residue chain is Large ribosomal subunit protein bL34 (45 aa).

Belongs to the bacterial ribosomal protein bL34 family.

The chain is Large ribosomal subunit protein bL34 from Arthrobacter sp. (strain FB24).